Reading from the N-terminus, the 333-residue chain is Probable ABC transporter permease protein y4mJ (333 aa).

Helical transmembrane passes span 30-50 (LAIA…VPQA), 62-82 (AGAP…TGGI), 84-104 (LSVG…MASG), 110-130 (ALIG…LVTV), 133-153 (LAPF…AFIV), 175-195 (IPGV…IEIF), 228-248 (FAYV…ISYI), 253-273 (STAG…GGAS), 274-294 (LLGG…ITVI), and 300-320 (LIGI…LIAV).

This sequence belongs to the binding-protein-dependent transport system permease family. AraH/RbsC subfamily.

The protein resides in the cell inner membrane. In terms of biological role, probably part of the binding-protein-dependent transport system y4mIJK. This system probably transports a sugar. Probably responsible for the translocation of the substrate across the membrane. In Sinorhizobium fredii (strain NBRC 101917 / NGR234), this protein is Probable ABC transporter permease protein y4mJ.